We begin with the raw amino-acid sequence, 631 residues long: Phosphomethylpyrimidine synthase (631 aa).

Substrate is bound by residues Asn-239, Met-268, Tyr-297, His-333, 353–355 (SRG), 394–397 (DGLR), and Glu-433. A Zn(2+)-binding site is contributed by His-437. Substrate is bound at residue Tyr-460. His-501 contacts Zn(2+). Residues Cys-581, Cys-584, and Cys-589 each coordinate [4Fe-4S] cluster.

This sequence belongs to the ThiC family. In terms of assembly, homodimer. [4Fe-4S] cluster is required as a cofactor.

It catalyses the reaction 5-amino-1-(5-phospho-beta-D-ribosyl)imidazole + S-adenosyl-L-methionine = 4-amino-2-methyl-5-(phosphooxymethyl)pyrimidine + CO + 5'-deoxyadenosine + formate + L-methionine + 3 H(+). The protein operates within cofactor biosynthesis; thiamine diphosphate biosynthesis. In terms of biological role, catalyzes the synthesis of the hydroxymethylpyrimidine phosphate (HMP-P) moiety of thiamine from aminoimidazole ribotide (AIR) in a radical S-adenosyl-L-methionine (SAM)-dependent reaction. The polypeptide is Phosphomethylpyrimidine synthase (Salmonella agona (strain SL483)).